Consider the following 323-residue polypeptide: tRNA dimethylallyltransferase (323 aa).

12–19 (GPTAAGKT) is an ATP binding site. 14–19 (TAAGKT) provides a ligand contact to substrate. 2 interaction with substrate tRNA regions span residues 37 to 40 (DSAL) and 161 to 165 (QRLIR).

It belongs to the IPP transferase family. Monomer. The cofactor is Mg(2+).

The catalysed reaction is adenosine(37) in tRNA + dimethylallyl diphosphate = N(6)-dimethylallyladenosine(37) in tRNA + diphosphate. Its function is as follows. Catalyzes the transfer of a dimethylallyl group onto the adenine at position 37 in tRNAs that read codons beginning with uridine, leading to the formation of N6-(dimethylallyl)adenosine (i(6)A). In Pseudomonas putida (strain GB-1), this protein is tRNA dimethylallyltransferase.